A 480-amino-acid chain; its full sequence is tRNA-2-methylthio-N(6)-dimethylallyladenosine synthase (480 aa).

In terms of domain architecture, MTTase N-terminal spans 43–161; the sequence is KLYCLNTFGC…FPELLYSAMD (119 aa). The [4Fe-4S] cluster site is built by Cys52, Cys88, Cys122, Cys198, Cys202, and Cys205. One can recognise a Radical SAM core domain in the interval 184–414; sequence RKDGVKAWVT…LETQNRISKE (231 aa). The region spanning 417 to 480 is the TRAM domain; sequence DTFLGKVVEV…TWSLEGSIVR (64 aa).

Belongs to the methylthiotransferase family. MiaB subfamily. Monomer. Requires [4Fe-4S] cluster as cofactor.

Its subcellular location is the cytoplasm. The enzyme catalyses N(6)-dimethylallyladenosine(37) in tRNA + (sulfur carrier)-SH + AH2 + 2 S-adenosyl-L-methionine = 2-methylsulfanyl-N(6)-dimethylallyladenosine(37) in tRNA + (sulfur carrier)-H + 5'-deoxyadenosine + L-methionine + A + S-adenosyl-L-homocysteine + 2 H(+). In terms of biological role, catalyzes the methylthiolation of N6-(dimethylallyl)adenosine (i(6)A), leading to the formation of 2-methylthio-N6-(dimethylallyl)adenosine (ms(2)i(6)A) at position 37 in tRNAs that read codons beginning with uridine. This Acetivibrio thermocellus (strain ATCC 27405 / DSM 1237 / JCM 9322 / NBRC 103400 / NCIMB 10682 / NRRL B-4536 / VPI 7372) (Clostridium thermocellum) protein is tRNA-2-methylthio-N(6)-dimethylallyladenosine synthase.